Here is a 409-residue protein sequence, read N- to C-terminus: MRVLLSTAGSRGDVEPLVALAVRLQGLGVEARMCASPASAERLAEVGVPHVPVGLQLEGMLLQEGMPPPSPEEERRLAAKAIDMQFDEVPAAAEGCAAVVAAGELAAAAAVRSVAEMLGIPYFYAAYSPNYLPSPHHAPPEDERTTPGVTDNKVLWDERGQRFAKRYGDTLNSRRASVGLPPVEDVFGYGYSERPWLATDPILAPLPPDFDAVQTGTWILPDERPLSAELEAFLAAGSPPVYLGFGSASGPGIDDAARVAIEAIRAHGRRIVLLSGWADLVRPDDGADCFSVDEVNLQVLFSRAAAAIHHGSAGTEHLATLAGIPQIVIPRHTDQPYYAERVADLGIGVALEGPVPTFDAMSAAVATALAPETRARATAVAGTIRTDGAAVAARLLLDAVSREKSAVLA.

This sequence belongs to the glycosyltransferase 28 family.

It catalyses the reaction dTDP-beta-L-vancosamine + devancoaminyl-vancomycin = epivancomycin + dTDP + H(+). The enzyme catalyses chloroorienticin B + dTDP-beta-L-vancosamine = chloroeremomycin + dTDP + H(+). The protein operates within antibiotic biosynthesis; vancomycin biosynthesis. Catalyzes the attachment of dTDP-L-4-epi-vancosamine to chloroorienticin B to form chloroeremomycin in the biosynthesis of glycopeptide antibiotic chloroeremomycin, a member of the vancomycin group of antibiotics. Also able to use dTDP-L-4-epi-vancosamine and devancoaminyl-vancomycin (DVV) to create epivancomycin. Acts downstream of GtfA. This chain is Glycosyltransferase GtfC (gtfC), found in Amycolatopsis orientalis (Nocardia orientalis).